Here is a 1601-residue protein sequence, read N- to C-terminus: Rap guanine nucleotide exchange factor 6 (1601 aa).

N-acetylmethionine is present on Met1. 2 disordered regions span residues 1 to 22 (MNSP…ERTP) and 179 to 250 (PHPQ…QGRD). Ser3 is modified (phosphoserine). Residues 187 to 205 (SSSQSGCSIASDSGSSSLS) are compositionally biased toward low complexity. Residues 228–241 (VDSEDDEEEDEEID) are compositionally biased toward acidic residues. Residue 280-399 (AFANMTMSVR…VEEEGEIVMV (120 aa)) coordinates a nucleoside 3',5'-cyclic phosphate. The N-terminal Ras-GEF domain occupies 412–526 (KGHIVIKATP…LLNIACAAKA (115 aa)). A PDZ domain is found at 530 to 615 (QVVLQKASRE…LTVKTNIFVF (86 aa)). A Ras-associating domain is found at 749-835 (PDQVIRVFKV…GRYYLKNNME (87 aa)). The Ras-GEF domain maps to 860–1088 (STIEVATQLS…LDVQGGAHKK (229 aa)). Disordered regions lie at residues 1192–1274 (IRKK…SRSS), 1302–1324 (ESTG…QHGP), 1455–1478 (LEST…VYKT), and 1571–1601 (QRHN…VSAV). Composition is skewed to low complexity over residues 1229–1238 (SVASSLHSSP) and 1255–1274 (SAKS…SRSS). The segment covering 1586-1601 (TDADSEADENEQVSAV) has biased composition (acidic residues).

As to quaternary structure, interacts with the second PDZ domain of human PTP1e. As to expression, isoform 3 has highest expression levels in the brain, heart, liver, lung and placenta and is barely detectable in skeletal muscle, kidney and pancreas.

Its subcellular location is the cytoplasm. It is found in the cell membrane. Functionally, guanine nucleotide exchange factor (GEF) for Rap1A, Rap2A and M-Ras GTPases. Does not interact with cAMP. The chain is Rap guanine nucleotide exchange factor 6 (RAPGEF6) from Homo sapiens (Human).